The sequence spans 1393 residues: Major capsid protein (1393 aa).

It belongs to the herpesviridae major capsid protein family. Homomultimer. Makes the hexons and eleven out of twelve pentons. Interacts with triplex proteins 1/TRX1 and 2/TRX2; adjacent capsomers are linked together in groups of three by triplexes, heterotrimeric complexes composed of one molecule of TRX1 and two molecules of TRX2. Interacts with scaffold protein; this interaction allows efficient MCP transport to the host nucleus. Interacts with capsid vertex component 2/CVC2. Interacts with the small capsomere-interacting protein/SCP.

It localises to the virion. Its subcellular location is the host nucleus. Its function is as follows. Self-assembles to form an icosahedral capsid with a T=16 symmetry, about 200 nm in diameter, and consisting of 150 hexons and 12 pentons (total of 162 capsomers). Hexons form the edges and faces of the capsid and are each composed of six MCP molecules. In contrast, one penton is found at each of the 12 vertices. Eleven of the pentons are MCP pentamers, while the last vertex is occupied by the portal complex. The capsid is surrounded by a layer of proteinaceous material designated the tegument which, in turn, is enclosed in an envelope of host cell-derived lipids containing virus-encoded glycoproteins. The chain is Major capsid protein from Gallus gallus (Chicken).